Consider the following 167-residue polypeptide: RNA pyrophosphohydrolase (167 aa).

One can recognise a Nudix hydrolase domain in the interval 8 to 158 (PYRTCVGMML…KRPVYERVVK (151 aa)). The Nudix box motif lies at 47–68 (GGVDPGEDTWEAAKRELYEETN).

It belongs to the Nudix hydrolase family. RppH subfamily. The cofactor is a divalent metal cation.

In terms of biological role, accelerates the degradation of transcripts by removing pyrophosphate from the 5'-end of triphosphorylated RNA, leading to a more labile monophosphorylated state that can stimulate subsequent ribonuclease cleavage. This Rhodopseudomonas palustris (strain HaA2) protein is RNA pyrophosphohydrolase.